Here is a 469-residue protein sequence, read N- to C-terminus: IME2-dependent-signaling protein (469 aa).

M1 is modified (N-acetylmethionine). T13 is subject to Phosphothreonine. 3 disordered regions span residues 22–55, 67–92, and 117–143; these read KSWSESQDNPLLLNFNNSPIGTPTDRYSPEPATM, ARGSTQQQQRLYGSSQTREKSDQQQQ, and DLTLGSPEPSERASPIRQPSVDVPPLT. A phosphoserine mark is found at S23, S27, and S39. Polar residues-rich tracts occupy residues 25 to 42 and 67 to 82; these read SESQDNPLLLNFNNSPIG and ARGSTQQQQRLYGSSQ. Residues S122, S130, S136, S147, and S148 each carry the phosphoserine modification.

Seems to act indirectly to modify IME2 activity, thus permitting IME2 to carry out later meiotic functions. This Saccharomyces cerevisiae (strain ATCC 204508 / S288c) (Baker's yeast) protein is IME2-dependent-signaling protein (IDS2).